Consider the following 294-residue polypeptide: Protoheme IX farnesyltransferase (294 aa).

The next 9 membrane-spanning stretches (helical) occupy residues Val-24–Val-44, Leu-48–His-68, Ala-96–Asn-116, Leu-118–Leu-138, Asn-145–Thr-165, Ala-172–Ile-192, Gly-211–Leu-231, Trp-241–Phe-263, and Val-268–Leu-288.

The protein belongs to the UbiA prenyltransferase family. Protoheme IX farnesyltransferase subfamily.

It is found in the cell inner membrane. The catalysed reaction is heme b + (2E,6E)-farnesyl diphosphate + H2O = Fe(II)-heme o + diphosphate. It functions in the pathway porphyrin-containing compound metabolism; heme O biosynthesis; heme O from protoheme: step 1/1. In terms of biological role, converts heme B (protoheme IX) to heme O by substitution of the vinyl group on carbon 2 of heme B porphyrin ring with a hydroxyethyl farnesyl side group. The chain is Protoheme IX farnesyltransferase from Legionella pneumophila (strain Lens).